Reading from the N-terminus, the 66-residue chain is Neurotoxin BmK AGP-SYPU1 (66 aa).

The LCN-type CS-alpha/beta domain occupies 2-64 (RDAYIAQNYN…KPIRIPGKCH (63 aa)). Disulfide bonds link Cys-12/Cys-63, Cys-16/Cys-36, Cys-22/Cys-46, and Cys-26/Cys-48. Residues 65-66 (RR) constitute a propeptide, removed by a carboxypeptidase.

In terms of tissue distribution, expressed by the venom gland.

It is found in the secreted. Alpha toxins bind voltage-independently at site-3 of sodium channels (Nav) and inhibit the inactivation of the activated channels, thereby blocking neuronal transmission. This toxin has a strong analgesic effect when administered to mice by intraperitoneal injection. The sequence is that of Neurotoxin BmK AGP-SYPU1 from Olivierus martensii (Manchurian scorpion).